Here is a 194-residue protein sequence, read N- to C-terminus: Molybdenum cofactor guanylyltransferase (194 aa).

Residues 12-14 (LAG), K25, D71, and D101 each bind GTP. D101 contributes to the Mg(2+) binding site.

The protein belongs to the MobA family. In terms of assembly, monomer. Requires Mg(2+) as cofactor.

It localises to the cytoplasm. The catalysed reaction is Mo-molybdopterin + GTP + H(+) = Mo-molybdopterin guanine dinucleotide + diphosphate. In terms of biological role, transfers a GMP moiety from GTP to Mo-molybdopterin (Mo-MPT) cofactor (Moco or molybdenum cofactor) to form Mo-molybdopterin guanine dinucleotide (Mo-MGD) cofactor. The protein is Molybdenum cofactor guanylyltransferase of Salmonella typhimurium (strain LT2 / SGSC1412 / ATCC 700720).